The sequence spans 329 residues: MNAAITATAKYLPDGILSNLDLERMLDTNDEWIRTRTGISERRILRDPEKATSYICGEVARQLLEKRGMKAEELDLIIVATMTPDMLFPSTACLVQDIIGAGNAWAFDLNAACSGFLFALNTGSRFIESGAHKKVMVIGADKMSSVIDYTDRSTAILFGDGGGGVILEPATTEGCGVLDNRMYCDGTSGKDHLLMKGGGSLHPATHQTVDDHLHYIYQDGRMVFKSAVTSMANVAVEIMERNGLTAENVSWLVPHQANQRIISATAERMGISSDKFISNVARYGNTTAGTIPICLAELDEENKLHPGSNLVLCSFGAGYTWGGVYVKWQ.

Active-site residues include Cys113 and His255. Residues 256–260 form an ACP-binding region; it reads QANQR. The active site involves Asn285.

Belongs to the thiolase-like superfamily. FabH family. Homodimer.

It localises to the cytoplasm. The enzyme catalyses malonyl-[ACP] + acetyl-CoA + H(+) = 3-oxobutanoyl-[ACP] + CO2 + CoA. It functions in the pathway lipid metabolism; fatty acid biosynthesis. Its function is as follows. Catalyzes the condensation reaction of fatty acid synthesis by the addition to an acyl acceptor of two carbons from malonyl-ACP. Catalyzes the first condensation reaction which initiates fatty acid synthesis and may therefore play a role in governing the total rate of fatty acid production. Possesses both acetoacetyl-ACP synthase and acetyl transacylase activities. Its substrate specificity determines the biosynthesis of branched-chain and/or straight-chain of fatty acids. The protein is Beta-ketoacyl-[acyl-carrier-protein] synthase III of Chlorobium phaeovibrioides (strain DSM 265 / 1930) (Prosthecochloris vibrioformis (strain DSM 265)).